A 177-amino-acid chain; its full sequence is Protein LIGHT-DEPENDENT SHORT HYPOCOTYLS 10 (177 aa).

Over residues 1–10 (MSSPRERGKS) the composition is skewed to basic and acidic residues. Disordered stretches follow at residues 1–31 (MSSP…SQKR) and 144–177 (RGIP…FSFS). Residues 25–152 (RYESQKRRDW…ARGIPYKKKK (128 aa)) form the ALOG domain. Positions 150 to 154 (KKKKK) match the Nuclear localization signal motif. Over residues 168 to 177 (SSSSSSFSFS) the composition is skewed to low complexity.

The protein belongs to the plant homeotic and developmental regulators ALOG protein family.

It is found in the nucleus. Probable transcription regulator that acts as a developmental regulator by promoting cell growth in response to light. The protein is Protein LIGHT-DEPENDENT SHORT HYPOCOTYLS 10 (LSH10) of Arabidopsis thaliana (Mouse-ear cress).